We begin with the raw amino-acid sequence, 417 residues long: Serine hydroxymethyltransferase 1 (417 aa).

(6S)-5,6,7,8-tetrahydrofolate contacts are provided by residues L121 and 125-127 (GHL). Position 230 is an N6-(pyridoxal phosphate)lysine (K230). Residue 355-357 (SPF) coordinates (6S)-5,6,7,8-tetrahydrofolate.

Belongs to the SHMT family. As to quaternary structure, homodimer. Pyridoxal 5'-phosphate is required as a cofactor.

It localises to the cytoplasm. It carries out the reaction (6R)-5,10-methylene-5,6,7,8-tetrahydrofolate + glycine + H2O = (6S)-5,6,7,8-tetrahydrofolate + L-serine. It participates in one-carbon metabolism; tetrahydrofolate interconversion. The protein operates within amino-acid biosynthesis; glycine biosynthesis; glycine from L-serine: step 1/1. Its function is as follows. Catalyzes the reversible interconversion of serine and glycine with tetrahydrofolate (THF) serving as the one-carbon carrier. This reaction serves as the major source of one-carbon groups required for the biosynthesis of purines, thymidylate, methionine, and other important biomolecules. Also exhibits THF-independent aldolase activity toward beta-hydroxyamino acids, producing glycine and aldehydes, via a retro-aldol mechanism. The chain is Serine hydroxymethyltransferase 1 from Pseudomonas syringae pv. tomato (strain ATCC BAA-871 / DC3000).